The sequence spans 349 residues: Aspartate carbamoyltransferase catalytic subunit (349 aa).

Positions 59 and 60 each coordinate carbamoyl phosphate. L-aspartate is bound at residue K87. Carbamoyl phosphate contacts are provided by R109, H142, and Q145. Positions 182 and 253 each coordinate L-aspartate. G294 and P295 together coordinate carbamoyl phosphate.

The protein belongs to the aspartate/ornithine carbamoyltransferase superfamily. ATCase family. In terms of assembly, heterododecamer (2C3:3R2) of six catalytic PyrB chains organized as two trimers (C3), and six regulatory PyrI chains organized as three dimers (R2).

It carries out the reaction carbamoyl phosphate + L-aspartate = N-carbamoyl-L-aspartate + phosphate + H(+). It functions in the pathway pyrimidine metabolism; UMP biosynthesis via de novo pathway; (S)-dihydroorotate from bicarbonate: step 2/3. In terms of biological role, catalyzes the condensation of carbamoyl phosphate and aspartate to form carbamoyl aspartate and inorganic phosphate, the committed step in the de novo pyrimidine nucleotide biosynthesis pathway. This Synechococcus sp. (strain CC9311) protein is Aspartate carbamoyltransferase catalytic subunit.